Consider the following 442-residue polypeptide: UPF0489 protein C5orf22 (442 aa).

The disordered stretch occupies residues 175–210; sequence SSAKKPKLALEDSENTASTNCDSSSEGLEKDTATQR. The span at 189–200 shows a compositional bias: polar residues; it reads NTASTNCDSSSE.

The protein belongs to the UPF0489 family.

This is UPF0489 protein C5orf22 (C5orf22) from Homo sapiens (Human).